The sequence spans 219 residues: Redox-sensing transcriptional repressor Rex (219 aa).

A DNA-binding region (H-T-H motif) is located at residues 18–57; sequence LYYRFIQSLYNSGKLRVSSAELSEAVKVDSATIRRDFSYF. 92–97 contributes to the NAD(+) binding site; that stretch reads GVGHLG.

The protein belongs to the transcriptional regulatory Rex family. In terms of assembly, homodimer.

It localises to the cytoplasm. In terms of biological role, modulates transcription in response to changes in cellular NADH/NAD(+) redox state. This chain is Redox-sensing transcriptional repressor Rex, found in Exiguobacterium sibiricum (strain DSM 17290 / CCUG 55495 / CIP 109462 / JCM 13490 / 255-15).